A 312-amino-acid polypeptide reads, in one-letter code: DNA-directed RNA polymerase subunit alpha (312 aa).

Residues 1–226 (MIEFEKPIIT…EHLNLFTDLT (226 aa)) form an alpha N-terminal domain (alpha-NTD) region. An alpha C-terminal domain (alpha-CTD) region spans residues 243-312 (DEKVLDRTIE…DLGLGLKNDK (70 aa)).

It belongs to the RNA polymerase alpha chain family. Homodimer. The RNAP catalytic core consists of 2 alpha, 1 beta, 1 beta' and 1 omega subunit. When a sigma factor is associated with the core the holoenzyme is formed, which can initiate transcription.

The enzyme catalyses RNA(n) + a ribonucleoside 5'-triphosphate = RNA(n+1) + diphosphate. Its function is as follows. DNA-dependent RNA polymerase catalyzes the transcription of DNA into RNA using the four ribonucleoside triphosphates as substrates. This Streptococcus mutans serotype c (strain ATCC 700610 / UA159) protein is DNA-directed RNA polymerase subunit alpha.